We begin with the raw amino-acid sequence, 192 residues long: VQ motif-containing protein 22 (192 aa).

The span at 24-38 shows a compositional bias: low complexity; sequence ASTAVTTTTAGDTTS. The disordered stretch occupies residues 24–65; it reads ASTAVTTTTAGDTTSIDSRLSPETGRVTKPTRRRSRASRRTP. Positions 52-62 are enriched in basic residues; that stretch reads KPTRRRSRASR. The VQ motif lies at 76 to 85; sequence FRAMVQQYTG. 2 disordered regions span residues 101-135 and 163-192; these read FSLT…PQRP and FGTV…SRLQ. Low complexity-rich tracts occupy residues 102-114 and 175-192; these read SLTS…AGSS and APSS…SRLQ.

Its subcellular location is the nucleus. Functionally, may function as positive regulator of plant growth. The chain is VQ motif-containing protein 22 from Arabidopsis thaliana (Mouse-ear cress).